Consider the following 358-residue polypeptide: Ribosomal RNA large subunit methyltransferase M (358 aa).

S-adenosyl-L-methionine is bound by residues serine 191, 224–227, aspartate 243, aspartate 263, and aspartate 279; that span reads APGG. Lysine 308 acts as the Proton acceptor in catalysis.

It belongs to the class I-like SAM-binding methyltransferase superfamily. RNA methyltransferase RlmE family. RlmM subfamily. Monomer.

The protein localises to the cytoplasm. It catalyses the reaction cytidine(2498) in 23S rRNA + S-adenosyl-L-methionine = 2'-O-methylcytidine(2498) in 23S rRNA + S-adenosyl-L-homocysteine + H(+). In terms of biological role, catalyzes the 2'-O-methylation at nucleotide C2498 in 23S rRNA. This Marinobacter nauticus (strain ATCC 700491 / DSM 11845 / VT8) (Marinobacter aquaeolei) protein is Ribosomal RNA large subunit methyltransferase M.